Consider the following 532-residue polypeptide: ATP-dependent RNA helicase DBP3 (532 aa).

The interval 1 to 78 (MGKRDRTEDD…EVAEEKPKMT (78 aa)) is disordered. The segment covering 15-58 (KKVKLDKKDKKEKKEKKDKKDKKDKKDKKDKKDKKEKKEKKEKK) has biased composition (basic residues). Positions 126–152 (MEFSHVTLDPRITKVLTKFPRPTPIQA) match the Q motif motif. In terms of domain architecture, Helicase ATP-binding spans 155–327 (WPYLLAGKDM…EGFMKTPTKV (173 aa)). 168–175 (AETGSGKT) contacts ATP. The DEAD box motif lies at 274–277 (DEAD). The region spanning 356–502 (RLLDLLRQYA…PVPDELLKFG (147 aa)) is the Helicase C-terminal domain.

Belongs to the DEAD box helicase family. DDX5/DBP2 subfamily.

It localises to the nucleus. The protein resides in the nucleolus. The enzyme catalyses ATP + H2O = ADP + phosphate + H(+). In terms of biological role, ATP-dependent RNA helicase required for 60S ribosomal subunit synthesis. Involved in efficient pre-rRNA processing, predominantly at site A3, which is necessary for the normal formation of 25S and 5.8S rRNAs. The protein is ATP-dependent RNA helicase DBP3 (DBP3) of Yarrowia lipolytica (strain CLIB 122 / E 150) (Yeast).